Here is a 1029-residue protein sequence, read N- to C-terminus: MISIYGLVMALMMASVLASSSRFQRVPQSQSVVENESVKFECESTDSYSELHYDWLHNGHRIAYDKRVHQIGSNLHIEAVRRTEDVGNYVCIATNLASGAREASPPAKLSVIYLESASVQLLGSNRNELLLKCHVEGASGDLEPLEIEWYRNSEKLSTWKNVQLDQHRLIIRQPGSEDDGLYRCTASNAAGRVMSKQGYVYQSSVKCLPRLPRRKNQKMMESWDKQTFLCRGKRGGAAGLEALPAVPEDLRIVQGPIAQSIIKEGEPTALTCLYELPDELKNQRIQLRWRKDGKLLRQVELGGSAPILGHSFDSGKDALLREDARLVLHKQNGTLSFASIIASDAGQYQCQLQLEAHAPISSSPGILEVIEQLKFVPQPTSKNLELDAVVAKVHCKAQGTPTPQVQWIRDGENTTLPDQVEVDANGTLIFRNVNSEHRGNYTCLATNTQGQINATVAINVVVTPKFSVPPVGPIETSEQGTVVMHCQAIGDPKPTIQWDKDLKYLSENNTDRERFRFLENGTLEIRNVQVEDEGSYGCTIGNSAGLKREDVQLVVKTTGDGFAPEESGGDGFLVTRAVLITMTVALAYIVLVVGLMLWCRYRRQARKARLNDLSTKEAGGDQPDAAGNGKGSEQEPCLSKQHNGHSKSRSKSSGDAQKSDDTACSQQSRASKKSAHIYEQLALPRSGLSELIQIGRGEFGDVFVGKLKATLVTSPSDKDADTEKQHSNSENGSGGSGSGSTTLSTLNEKRRSKTSMDDIEEIKEEEQEQHNQSGLEQLVLVKALNKVKDEQACQEFRRQLDLLRAISHKGVVRLFGLCREKDPHYMVLEYTDWGDLKQFLLATAGKVNTATAGSSSPPPLTTSQVLAVAYQIARGMDAIYRARFTHRDLATRNCVISSEFIVKVSYPALCKDKYSREYHKHRNTLLPIRWLAPECIQEDEYTTKSDIFAYGVVVWELFNQATKLPHEELTNEQVVQRSQAGSLEWSVAEATPDSLREILLSCWVSNPKERPSFSQLGAALSKAMQSAEK.

The signal sequence occupies residues 1–18 (MISIYGLVMALMMASVLA). Residues 19–577 (SSSRFQRVPQ…GGDGFLVTRA (559 aa)) are Extracellular-facing. Ig-like C2-type domains follow at residues 21–110 (SRFQ…AKLS), 109–195 (LSVI…RVMS), 247–361 (PEDL…APIS), 364–459 (PGIL…VAIN), and 464–554 (PKFS…VQLV). An N-linked (GlcNAc...) asparagine glycan is attached at Asn35. Intrachain disulfides connect Cys42-Cys91, Cys133-Cys184, Cys272-Cys350, and Cys395-Cys443. Residues Asn332, Asn413, Asn425, Asn440, Asn453, Asn508, and Asn520 are each glycosylated (N-linked (GlcNAc...) asparagine). A disulfide bridge links Cys486 with Cys538. The chain crosses the membrane as a helical span at residues 578 to 598 (VLITMTVALAYIVLVVGLMLW). Residues 599 to 1029 (CRYRRQARKA…LSKAMQSAEK (431 aa)) are Cytoplasmic-facing. Disordered regions lie at residues 613–675 (LSTK…KKSA) and 714–756 (SPSD…KTSM). Over residues 651-669 (KSSGDAQKSDDTACSQQSR) the composition is skewed to polar residues. Position 674 is a phosphoserine (Ser674). The region spanning 688 to 1024 (LSELIQIGRG…QLGAALSKAM (337 aa)) is the Protein kinase; inactive domain. Basic and acidic residues predominate over residues 716–727 (SDKDADTEKQHS).

Belongs to the protein kinase superfamily. Tyr protein kinase family. Insulin receptor subfamily. In terms of assembly, interacts with plexA; component of a receptor complex that mediates the repulsive signaling in response to Semaphorin ligands.

It localises to the cell membrane. Acts as a calcium-dependent, homophilic cell adhesion molecule that regulates neural recognition during the development of the nervous system. Component of the repulsive Plexin signaling response to regulate motor axon guidance at the embryonic stage. Also component of a receptor complex that is required in the adult visual system to innervate the lamina layer; specific targeting of R1-R6 axons. This is Tyrosine-protein kinase-like otk from Drosophila simulans (Fruit fly).